The sequence spans 193 residues: Ion-translocating oxidoreductase complex subunit A (193 aa).

Helical transmembrane passes span 4 to 24, 38 to 58, 65 to 85, 102 to 122, 134 to 154, and 171 to 191; these read LALI…KFLG, AMGM…CSYL, APLG…AVVV, VLGI…VALL, AVYG…FAAL, and SVAL…AGLV.

The protein belongs to the NqrDE/RnfAE family. As to quaternary structure, the complex is composed of six subunits: RnfA, RnfB, RnfC, RnfD, RnfE and RnfG.

Its subcellular location is the cell inner membrane. In terms of biological role, part of a membrane-bound complex that couples electron transfer with translocation of ions across the membrane. This is Ion-translocating oxidoreductase complex subunit A from Alkalilimnicola ehrlichii (strain ATCC BAA-1101 / DSM 17681 / MLHE-1).